The following is a 109-amino-acid chain: Small ribosomal subunit protein uS10 (109 aa).

The protein belongs to the universal ribosomal protein uS10 family. Part of the 30S ribosomal subunit.

Functionally, involved in the binding of tRNA to the ribosomes. The polypeptide is Small ribosomal subunit protein uS10 (Koribacter versatilis (strain Ellin345)).